Here is a 2049-residue protein sequence, read N- to C-terminus: Nonribosomal peptide synthetase tcpP (2049 aa).

Residues 13-395 are adenylation 1; that stretch reads RHHAEAHPEA…LGRKDQLIKN (383 aa). The region spanning 497 to 573 is the Carrier 1 domain; sequence ATADTKLSAL…EISNHIIEFD (77 aa). Ser-534 carries the O-(pantetheine 4'-phosphoryl)serine modification. The tract at residues 605–913 is condensation 1; it reads REITMTDVQR…ALGSKMDLLS (309 aa). The tract at residues 1071–1452 is adenylation 2; that stretch reads VAAWPMSVAL…GRADHQVKVR (382 aa). One can recognise a Carrier 2 domain in the interval 1550-1625; that stretch reads DHTELVVSQV…SLAASVKKHL (76 aa). O-(pantetheine 4'-phosphoryl)serine is present on Ser-1585. Residues 1662-2044 are condensation 2; the sequence is MHKQASNPSS…FEQEICNLLD (383 aa).

This sequence belongs to the NRP synthetase family.

It functions in the pathway secondary metabolite biosynthesis. Functionally, nonribosomal peptide synthetase; part of the gene cluster that mediates the biosynthesis of an unusual class of epipolythiodioxopiperazines (ETPs) lacking the reactive thiol group important for toxicity. Firstly, L-tyrosine is prenylated by tcpD, before undergoing condensation with L-glycine in a reaction catalyzed by the NRPS tcpP leading to the diketopiperazine (DKP) backbone. Afterwards the alpha-carbon of tyrosine is oxidized by the cytochrome P450 tcpC to form a hydroxyl group. However, in contrast other ETP biosynthesis pathways studied so far, tcpC is not able to bishydroxylate the DKP at both alpha-carbon positions, but hydroxylates the alpha-carbon of the tyrosine part and the nitrogen of the glycine part. The next steps involve an alpha,beta-elimination reaction catalyzed by tcpI, a methylation by the methyltransferase tcpN the action of the four enzyme cascade tcpG/K/J/I. Due to a dysfunctional cytochrome P450 monooxygenase tcpC, the pathway leads to the biosynthesis of probable non-toxic metabolites lacking the reactive thiol group. This Claviceps purpurea (strain 20.1) (Ergot fungus) protein is Nonribosomal peptide synthetase tcpP.